Consider the following 917-residue polypeptide: Probable dipeptidyl-aminopeptidase B (917 aa).

Over residues Met-1–Pro-16 the composition is skewed to basic and acidic residues. The segment at Met-1 to Ser-21 is disordered. At Met-1 to Ala-99 the chain is on the cytoplasmic side. The helical; Signal-anchor for type II membrane protein transmembrane segment at Leu-100–Phe-120 threads the bilayer. Topologically, residues Arg-121 to Ile-917 are vacuolar. Residues Asn-135, Asn-351, and Asn-574 are each glycosylated (N-linked (GlcNAc...) asparagine). Ser-756 (charge relay system) is an active-site residue. N-linked (GlcNAc...) asparagine glycosylation occurs at Asn-815. Residues Asp-833 and His-866 each act as charge relay system in the active site. The N-linked (GlcNAc...) asparagine glycan is linked to Asn-902.

The protein belongs to the peptidase S9B family.

The protein localises to the vacuole membrane. It carries out the reaction Release of an N-terminal dipeptide, Xaa-Yaa-|-Zaa-, from a polypeptide, preferentially when Yaa is Pro, provided Zaa is neither Pro nor hydroxyproline.. In terms of biological role, type IV dipeptidyl-peptidase which removes N-terminal dipeptides sequentially from polypeptides having unsubstituted N-termini provided that the penultimate residue is proline. The protein is Probable dipeptidyl-aminopeptidase B (DAPB) of Ajellomyces capsulatus (strain H88) (Darling's disease fungus).